We begin with the raw amino-acid sequence, 201 residues long: Molybdenum cofactor guanylyltransferase (201 aa).

Residues 14 to 16 (LAG), Lys-31, and Asp-104 each bind GTP. Asp-104 lines the Mg(2+) pocket.

Belongs to the MobA family. In terms of assembly, monomer. Requires Mg(2+) as cofactor.

It is found in the cytoplasm. It carries out the reaction Mo-molybdopterin + GTP + H(+) = Mo-molybdopterin guanine dinucleotide + diphosphate. Transfers a GMP moiety from GTP to Mo-molybdopterin (Mo-MPT) cofactor (Moco or molybdenum cofactor) to form Mo-molybdopterin guanine dinucleotide (Mo-MGD) cofactor. This is Molybdenum cofactor guanylyltransferase from Helicobacter pylori (strain G27).